We begin with the raw amino-acid sequence, 427 residues long: Septin-8-B (427 aa).

One can recognise a Septin-type G domain in the interval 39–305; it reads QGFCFNILCV…ELYRRCKLEE (267 aa). The segment at 49–56 is G1 motif; that stretch reads GETGIGKS. Residues 49-56, G104, 185-193, G239, and R254 contribute to the GTP site; these read GETGIGKS and KADTISKSE. Residues 101–104 are G3 motif; that stretch reads DTVG. The segment at 184–187 is G4 motif; the sequence is AKAD. The stretch at 320 to 407 forms a coiled coil; the sequence is LQETYEAKRK…RRKVAMETLQ (88 aa). Residues 406 to 418 show a composition bias toward polar residues; sequence LQSQSFQATSQQP. The disordered stretch occupies residues 406–427; the sequence is LQSQSFQATSQQPLKKDKDRKN.

Belongs to the TRAFAC class TrmE-Era-EngA-EngB-Septin-like GTPase superfamily. Septin GTPase family.

This is Septin-8-B (sept8-b) from Xenopus laevis (African clawed frog).